The chain runs to 466 residues: Argininosuccinate lyase (466 aa).

Belongs to the lyase 1 family. Argininosuccinate lyase subfamily.

It localises to the cytoplasm. It catalyses the reaction 2-(N(omega)-L-arginino)succinate = fumarate + L-arginine. It functions in the pathway amino-acid biosynthesis; L-arginine biosynthesis; L-arginine from L-ornithine and carbamoyl phosphate: step 3/3. The polypeptide is Argininosuccinate lyase (Synechococcus sp. (strain ATCC 27144 / PCC 6301 / SAUG 1402/1) (Anacystis nidulans)).